A 360-amino-acid polypeptide reads, in one-letter code: Serine/threonine-protein phosphatase 2A activator 2 (360 aa).

The protein belongs to the PTPA-type PPIase family.

It is found in the cytoplasm. It catalyses the reaction [protein]-peptidylproline (omega=180) = [protein]-peptidylproline (omega=0). Functionally, PPIases accelerate the folding of proteins. It catalyzes the cis-trans isomerization of proline imidic peptide bonds in oligopeptides. Acts as a regulatory subunit for PP2A-like phosphatases modulating their activity or substrate specificity, probably by inducing a conformational change in the catalytic subunit, a direct target of the PPIase. Can reactivate inactive phosphatase PP2A-phosphatase methylesterase complexes (PP2Ai) in presence of ATP and Mg(2+) by dissociating the inactive form from the complex. The sequence is that of Serine/threonine-protein phosphatase 2A activator 2 (RRD2) from Kluyveromyces lactis (strain ATCC 8585 / CBS 2359 / DSM 70799 / NBRC 1267 / NRRL Y-1140 / WM37) (Yeast).